The following is a 191-amino-acid chain: 7-methyl-GTP pyrophosphatase (191 aa).

Asp70 (proton acceptor) is an active-site residue.

This sequence belongs to the Maf family. YceF subfamily. A divalent metal cation serves as cofactor.

It localises to the cytoplasm. It catalyses the reaction N(7)-methyl-GTP + H2O = N(7)-methyl-GMP + diphosphate + H(+). In terms of biological role, nucleoside triphosphate pyrophosphatase that hydrolyzes 7-methyl-GTP (m(7)GTP). May have a dual role in cell division arrest and in preventing the incorporation of modified nucleotides into cellular nucleic acids. The polypeptide is 7-methyl-GTP pyrophosphatase (Xanthomonas oryzae pv. oryzae (strain KACC10331 / KXO85)).